We begin with the raw amino-acid sequence, 367 residues long: Flagellar P-ring protein (367 aa).

The first 21 residues, 1–21 (MYVFKALAGIVLALVATLAHA), serve as a signal peptide directing secretion.

This sequence belongs to the FlgI family. The basal body constitutes a major portion of the flagellar organelle and consists of four rings (L,P,S, and M) mounted on a central rod.

Its subcellular location is the periplasm. The protein resides in the bacterial flagellum basal body. Functionally, assembles around the rod to form the L-ring and probably protects the motor/basal body from shearing forces during rotation. This Salmonella paratyphi C (strain RKS4594) protein is Flagellar P-ring protein.